Consider the following 303-residue polypeptide: N-acetyl-D-glucosamine kinase (303 aa).

ATP-binding positions include 4 to 11 and 133 to 140; these read GFDIGGTK and GVGGGLVL. The Zn(2+) site is built by H157, C177, C179, and C184.

The protein belongs to the ROK (NagC/XylR) family. NagK subfamily.

It carries out the reaction N-acetyl-D-glucosamine + ATP = N-acetyl-D-glucosamine 6-phosphate + ADP + H(+). Its pathway is cell wall biogenesis; peptidoglycan recycling. Its function is as follows. Catalyzes the phosphorylation of N-acetyl-D-glucosamine (GlcNAc) derived from cell-wall degradation, yielding GlcNAc-6-P. In Salmonella heidelberg (strain SL476), this protein is N-acetyl-D-glucosamine kinase.